Here is a 95-residue protein sequence, read N- to C-terminus: Histone-like DNA-binding protein (95 aa).

Belongs to the bacterial histone-like protein family.

The polypeptide is Histone-like DNA-binding protein (Rickettsia conorii (strain ATCC VR-613 / Malish 7)).